The sequence spans 552 residues: Probable inorganic phosphate transporter 1-10 (552 aa).

At Met1 to Ala22 the chain is on the cytoplasmic side. Residues Ile23 to Val43 traverse the membrane as a helical segment. Residues Met44–Ser68 lie on the Extracellular side of the membrane. The chain crosses the membrane as a helical span at residues Ala69 to Gly89. Over Asp90–Arg96 the chain is Cytoplasmic. Residues Val97–Cys117 traverse the membrane as a helical segment. Residues Arg118 to Ala123 lie on the Extracellular side of the membrane. The helical transmembrane segment at Leu124–Leu144 threads the bilayer. Residues Ser145–Arg158 are Cytoplasmic-facing. A helical membrane pass occupies residues Gly159–Val179. Topologically, residues Thr180 to Ala203 are extracellular. A helical membrane pass occupies residues Asp204–Trp224. The Cytoplasmic portion of the chain corresponds to Arg225–Asp295. A helical membrane pass occupies residues Leu296–Phe316. The Extracellular portion of the chain corresponds to Gln317 to Lys342. Residues Phe343–Ile363 traverse the membrane as a helical segment. Over Asp364–Arg369 the chain is Cytoplasmic. A helical membrane pass occupies residues Cys370–Tyr390. Over Asp391–His397 the chain is Extracellular. The helical transmembrane segment at Gly398–Pro418 threads the bilayer. Residues Asn419–His439 lie on the Cytoplasmic side of the membrane. A helical membrane pass occupies residues Gly440–Ala460. At Ser461–Pro473 the chain is on the extracellular side. A helical membrane pass occupies residues Gly474 to Leu494. Topologically, residues Thr495–Val552 are cytoplasmic. The tract at residues Leu507–Leu540 is disordered.

The protein belongs to the major facilitator superfamily. Phosphate:H(+) symporter (TC 2.A.1.9) family. As to expression, expressed at low levels in roots.

It localises to the membrane. In terms of biological role, high-affinity transporter for external inorganic phosphate. The protein is Probable inorganic phosphate transporter 1-10 (PHT1-10) of Oryza sativa subsp. japonica (Rice).